A 216-amino-acid chain; its full sequence is Elongation factor Ts (216 aa).

An involved in Mg(2+) ion dislocation from EF-Tu region spans residues 81 to 84 (TDFV).

Belongs to the EF-Ts family.

It is found in the cytoplasm. Functionally, associates with the EF-Tu.GDP complex and induces the exchange of GDP to GTP. It remains bound to the aminoacyl-tRNA.EF-Tu.GTP complex up to the GTP hydrolysis stage on the ribosome. This is Elongation factor Ts from Geobacter metallireducens (strain ATCC 53774 / DSM 7210 / GS-15).